Reading from the N-terminus, the 295-residue chain is ATP synthase gamma chain (295 aa).

Belongs to the ATPase gamma chain family. In terms of assembly, F-type ATPases have 2 components, CF(1) - the catalytic core - and CF(0) - the membrane proton channel. CF(1) has five subunits: alpha(3), beta(3), gamma(1), delta(1), epsilon(1). CF(0) has three main subunits: a, b and c.

Its subcellular location is the cell inner membrane. Its function is as follows. Produces ATP from ADP in the presence of a proton gradient across the membrane. The gamma chain is believed to be important in regulating ATPase activity and the flow of protons through the CF(0) complex. The sequence is that of ATP synthase gamma chain from Aliarcobacter butzleri (strain RM4018) (Arcobacter butzleri).